The chain runs to 395 residues: MMKNERRSVNWPMIAGVAAVAAAVGFGAAHLPVSEKSPASTQAPEAQKPQSAPVKPGLKEVKIPATYLAAANIAVEPVASAAVGTEILAPATVAALPGSEAVIVSRAAGAVQRVQRRLGDVVKAGDVLALVDSPEAAGMAAERKVAQAKADLARKTYEREASLFQQGVTPRQEMEAAKAALDVAQAEALRAATVAQSAHLASDGRSVAVVSPIAGKITAQSVTLGAFVAPQAELFRVAGTGAVQVEAAVTAADTSRIVAGSEATILLANGSPLSARVQAVTPTVTGSARVATVVVVPAQPTDRLVVGEGVQVRLRTAVADAAALSVPEDAVQNLDGRDVLFVRTQEGFRPMPVLVGTRSGGSAQILSGVQAGEQVATRNAFLVKAEMNKGGGDEE.

Residues 13–33 traverse the membrane as a helical segment; that stretch reads MIAGVAAVAAAVGFGAAHLPV. The interval 35–55 is disordered; it reads EKSPASTQAPEAQKPQSAPVK. The span at 37 to 50 shows a compositional bias: polar residues; that stretch reads SPASTQAPEAQKPQ. Residues 140 to 193 adopt a coiled-coil conformation; it reads AAERKVAQAKADLARKTYEREASLFQQGVTPRQEMEAAKAALDVAQAEALRAAT.

The protein belongs to the membrane fusion protein (MFP) (TC 8.A.1) family.

The protein resides in the cell inner membrane. The products of the genes cnrA, cnrB, and cnrC are likely to form a membrane-bound protein complex catalyzing an energy-dependent efflux of Ni(2+) and Co(2+). The mechanism of action of the CnrCBA complex may be that of a proton/cation antiporter. This chain is Nickel and cobalt resistance protein CnrB (cnrB), found in Cupriavidus metallidurans (strain ATCC 43123 / DSM 2839 / NBRC 102507 / CH34) (Ralstonia metallidurans).